A 139-amino-acid polypeptide reads, in one-letter code: ATP synthase epsilon chain (139 aa).

It belongs to the ATPase epsilon chain family. F-type ATPases have 2 components, CF(1) - the catalytic core - and CF(0) - the membrane proton channel. CF(1) has five subunits: alpha(3), beta(3), gamma(1), delta(1), epsilon(1). CF(0) has three main subunits: a, b and c.

Its subcellular location is the cell inner membrane. In terms of biological role, produces ATP from ADP in the presence of a proton gradient across the membrane. This Salmonella arizonae (strain ATCC BAA-731 / CDC346-86 / RSK2980) protein is ATP synthase epsilon chain.